The following is a 117-amino-acid chain: Small nuclear ribonucleoprotein Sm D1 (117 aa).

The Sm domain maps to 2 to 74; that stretch reads KLVRFLMKLT…IRYYILPDSL (73 aa). Residues 81–117 form a disordered region; it reads IDDSTKPKQKKKEVVRGRGRGRGRGTRGRGRGASRGF. Positions 87–117 are enriched in basic residues; that stretch reads PKQKKKEVVRGRGRGRGRGTRGRGRGASRGF.

The protein belongs to the snRNP core protein family. Belongs to the 40S cdc5-associated complex (or cwf complex), a spliceosome sub-complex reminiscent of a late-stage spliceosome composed of the U2, U5 and U6 snRNAs and at least brr2, cdc5, cwf2/prp3, cwf3/syf1, cwf4/syf3, cwf5/ecm2, spp42/cwf6, cwf7/spf27, cwf8, cwf9, cwf10, cwf11, cwf12, prp45/cwf13, cwf14, cwf15, cwf16, cwf17, cwf18, cwf19, cwf20, cwf21, cwf22, cwf23, cwf24, cwf25, cwf26, cyp7/cwf27, cwf28, cwf29/ist3, lea1, msl1, prp5/cwf1, prp10, prp12/sap130, prp17, prp22, sap61, sap62, sap114, sap145, slu7, smb1, smd1, smd3, smf1, smg1 and syf2. Interacts with saf5; the interaction is direct.

The protein resides in the nucleus. The protein localises to the cytoplasm. Plays a role in pre-mRNA splicing as a core component of the spliceosomal U1, U2, U4 and U5 small nuclear ribonucleoproteins (snRNPs), the building blocks of the spliceosome. This chain is Small nuclear ribonucleoprotein Sm D1 (smd1), found in Schizosaccharomyces pombe (strain 972 / ATCC 24843) (Fission yeast).